The following is a 469-amino-acid chain: Zinc finger and BTB domain-containing protein 8A.1-B (469 aa).

Residues 24 to 92 (CDCHIIVEGQ…VYSGKLPLSG (69 aa)) enclose the BTB domain. C2H2-type zinc fingers lie at residues 315–337 (FKCPFCTHTVKRKADLKRHLRCH) and 343–366 (YPCEACGKRFTRLEHLRNHFQTIH).

It is found in the nucleus. In terms of biological role, may be involved in transcriptional regulation. In Xenopus laevis (African clawed frog), this protein is Zinc finger and BTB domain-containing protein 8A.1-B (zbtb8a.1-b).